We begin with the raw amino-acid sequence, 376 residues long: Probable allantoicase (376 aa).

Belongs to the allantoicase family.

It catalyses the reaction allantoate + H2O = (S)-ureidoglycolate + urea. It functions in the pathway nitrogen metabolism; (S)-allantoin degradation; (S)-ureidoglycolate from allantoate (aminidohydrolase route): step 1/1. The sequence is that of Probable allantoicase from Streptomyces avermitilis (strain ATCC 31267 / DSM 46492 / JCM 5070 / NBRC 14893 / NCIMB 12804 / NRRL 8165 / MA-4680).